Here is a 581-residue protein sequence, read N- to C-terminus: Putative ABC transporter ATP-binding protein MM_1996 (581 aa).

The 241-residue stretch at 10 to 250 (IEIRDLWYTY…LEVFHRLGLR (241 aa)) folds into the ABC transporter 1 domain. ATP is bound at residue 44–51 (GPTGCGKS). The disordered stretch occupies residues 287 to 309 (GDYPASPGRKEKTSSPGWSSENN). A compositionally biased stretch (polar residues) spans 300–309 (SSPGWSSENN). Residues 313-541 (VSVRDLWSGY…IDILRKASLT (229 aa)) form the ABC transporter 2 domain. Residue 346–353 (GTNGSGKS) coordinates ATP.

This sequence belongs to the ABC transporter superfamily.

The protein resides in the cell membrane. Its function is as follows. Probably part of an ABC transporter complex. Responsible for energy coupling to the transport system. The protein is Putative ABC transporter ATP-binding protein MM_1996 of Methanosarcina mazei (strain ATCC BAA-159 / DSM 3647 / Goe1 / Go1 / JCM 11833 / OCM 88) (Methanosarcina frisia).